The primary structure comprises 571 residues: Optineurin (571 aa).

2 disordered regions span residues 1–32 and 100–144; these read MSHQ…HPNL and LSHE…DQLR. The stretch at 38–170 forms a coiled coil; that stretch reads EELLQQMKEL…VSELQLKLNS (133 aa). The interval 58 to 209 is interaction with Rab8; the sequence is MKLNNQAMKG…GPTRTVSIGT (152 aa). 2 stretches are compositionally biased toward basic and acidic residues: residues 100–123 and 130–143; these read LSHE…RSSE and RLPR…KDQL. An LIR motif is present at residues 176 to 181; sequence DSFVEI. Ser-177 is subject to Phosphoserine; by TBK1. Positions 186–197 are enriched in basic and acidic residues; sequence GEAEGSVKEIKH. Disordered stretches follow at residues 186–210 and 255–291; these read GEAE…IGTS and VSDF…TVGS. Ser-198 carries the phosphoserine modification. Residues 201–210 show a composition bias toward polar residues; it reads PTRTVSIGTS. A coiled-coil region spans residues 233 to 502; sequence CLREGNQKVE…LLKENDAFED (270 aa). 2 stretches are compositionally biased toward basic and acidic residues: residues 255 to 268 and 275 to 286; these read VSDF…RSEI and STEKENEEEKGP. At Ser-336 the chain carries Phosphoserine. The interaction with HD stretch occupies residues 405–571; sequence TRKESEKVDR…LQIHVMDCII (167 aa). Residues 406 to 514 are interaction with MYO6; it reads RKESEKVDRA…RQSLMEMQSR (109 aa). The UBAN signature appears at 468-473; that stretch reads DFHAER. The residue at position 520 (Ser-520) is a Phosphoserine. Residues 541-571 form a CCHC NOA-type zinc finger; sequence QRNIPIHSCPKCGEVLPDIDTLQIHVMDCII. Cys-549, Cys-552, His-565, and Cys-569 together coordinate Zn(2+).

As to quaternary structure, self-associates. Interacts with HD. Interacts with GTF3A. Interacts with MYO6. Interacts (via UBAN) with ubiquitinated TFRC. Interacts with GTP-bound Rab8 (RAB8A and/or RAB8B). Interacts with TBC1D17. Interacts with TBK1. Interacts with TRAF3. Binds to linear ubiquitin chains. Interacts with LC3 family members MAP1LC3A, MAP1LC3B, GABARAP, GABARAPL1 and GABARAPL2; OPTN phosphorylation increases the association (at least with MAP1LC3B). Interacts with RAB12; the interaction may be indirect. Interacts with TBK1; this interaction leads to the Golgi localization of TBK1 and its subsequent activation. Interacts with palmitoyltransferase ZDHHC17/HIP14; the interaction does not lead to palmitoylation of OPTN. Interacts with CYLD. Interacts with TOM1; the interaction is indirect and is mediated by MYO6, which acts as a bridge between TOM1 and OPTN. Interacts with USP12; the interaction is independent of USP12 deubiquitinase activity and may be involved in regulation of autophagic flux. Phosphorylated by TBK1, leading to restrict bacterial proliferation in case of infection.

The protein localises to the cytoplasm. It is found in the perinuclear region. The protein resides in the golgi apparatus. Its subcellular location is the trans-Golgi network. It localises to the cytoplasmic vesicle. The protein localises to the autophagosome. It is found in the recycling endosome. Its function is as follows. Plays an important role in the maintenance of the Golgi complex, in membrane trafficking, in exocytosis, through its interaction with myosin VI and Rab8. Links myosin VI to the Golgi complex and plays an important role in Golgi ribbon formation. Negatively regulates the induction of IFNB in response to RNA virus infection. Plays a neuroprotective role in the eye and optic nerve. Probably part of the TNF-alpha signaling pathway that can shift the equilibrium toward induction of cell death. May act by regulating membrane trafficking and cellular morphogenesis via a complex that contains Rab8 and huntingtin (HD). Mediates the interaction of Rab8 with the probable GTPase-activating protein TBC1D17 during Rab8-mediated endocytic trafficking, such as that of transferrin receptor (TFRC/TfR); regulates Rab8 recruitment to tubules emanating from the endocytic recycling compartment. Autophagy receptor that interacts directly with both the cargo to become degraded and an autophagy modifier of the MAP1 LC3 family; targets ubiquitin-coated bacteria (xenophagy) and appears to function in the same pathway as SQSTM1 and CALCOCO2/NDP52. The chain is Optineurin (OPTN) from Macaca fascicularis (Crab-eating macaque).